Here is a 164-residue protein sequence, read N- to C-terminus: Cyclin-dependent kinase inhibitor 1 (164 aa).

S2 bears the N-acetylserine mark. S2 participates in a covalent cross-link: Glycyl serine ester (Ser-Gly) (interchain with G-Cter in ubiquitin). The segment at 13-41 (HGSKACRRLFGPVDSEQLRRDCDALMAGC) adopts a C4-type zinc-finger fold. A required for binding cyclins region spans residues 17-24 (ACRRLFGP). The interval 53-58 (FVTETP) is required for binding CDKs. Residues 80–164 (AGPRGGRDDL…RRLIFSKRKP (85 aa)) are disordered. S114 carries the post-translational modification Phosphoserine; by GSK3-beta. A Phosphoserine modification is found at S130. Positions 140-164 (RKRRQTSMTDFYHSKRRLIFSKRKP) match the PIP-box K+4 motif motif. The short motif at 141–156 (KRRQTSMTDFYHSKRR) is the Nuclear localization signal element. T145 carries the phosphothreonine; by PKA, PKB/AKT1, PIM1 and PIM2 modification. S146 is subject to Phosphoserine; by PKC and NUAK1. An interaction with TRIM39 region spans residues 152 to 164 (HSKRRLIFSKRKP). Over residues 153 to 164 (SKRRLIFSKRKP) the composition is skewed to basic residues. Phosphoserine is present on S160.

It belongs to the CDI family. As to quaternary structure, interacts with HDAC1; the interaction is prevented by competitive binding of C10orf90/FATS to HDAC1 facilitating acetylation and protein stabilization of CDKN1A/p21. Interacts with MKRN1. Interacts with PSMA3. Interacts with PCNA. Component of the ternary complex, cyclin D-CDK4-CDKN1A. Interacts (via its N-terminal domain) with CDK4; the interaction promotes the assembly of the cyclin D-CDK4 complex, its nuclear translocation and promotes the cyclin D-dependent enzyme activity of CDK4. Binding to CDK2 leads to CDK2/cyclin E inactivation at the G1-S phase DNA damage checkpoint, thereby arresting cells at the G1-S transition during DNA repair. Interacts with PIM1. Interacts with STK11 and NUAK1. Interacts with DTL and TRIM39. Interacts with PKP3; the interaction sequesters CDKN1A to the cytoplasm thereby repressing its role as an inhibitor of CDK4- and CDK6-driven RB1 phosphorylation. Post-translationally, phosphorylation of Thr-145 by Akt or of Ser-146 by PKC impairs binding to PCNA. Phosphorylation at Ser-114 by GSK3-beta enhances ubiquitination by the DCX(DTL) complex. Phosphorylation of Thr-145 by PIM2 enhances protein stability and inhibits cell proliferation. Phosphorylation of Thr-145 by PIM1 results in the relocation of CDKN1A to the cytoplasm and enhanced CDKN1A protein stability. UV radiation-induced phosphorylation at Ser-146 by NUAK1 leads to its degradation. Ubiquitinated by MKRN1; leading to polyubiquitination and 26S proteasome-dependent degradation. Ubiquitinated by the DCX(DTL) complex, also named CRL4(CDT2) complex, leading to its degradation during S phase or following UV irradiation. Ubiquitination by the DCX(DTL) complex is essential to control replication licensing and is PCNA-dependent: interacts with PCNA via its PIP-box, while the presence of the containing the 'K+4' motif in the PIP box, recruit the DCX(DTL) complex, leading to its degradation. Ubiquitination at Ser-2 leads to degradation by the proteasome pathway. Ubiquitinated by RNF114; leading to proteasomal degradation. In terms of processing, acetylation leads to protein stability. Acetylated in vitro on Lys-141, Lys-154, Lys-161 and Lys-163. Deacetylation by HDAC1 is prevented by competitive binding of C10orf90/FATS to HDAC1.

The protein localises to the cytoplasm. The protein resides in the nucleus. Its function is as follows. May be involved in p53/TP53 mediated inhibition of cellular proliferation in response to DNA damage. Binds to and inhibits cyclin-dependent kinase activity, preventing phosphorylation of critical cyclin-dependent kinase substrates and blocking cell cycle progression. Functions in the nuclear localization and assembly of cyclin D-CDK4 complex and promotes its kinase activity towards RB1. At higher stoichiometric ratios, inhibits the kinase activity of the cyclin D-CDK4 complex. Inhibits DNA synthesis by DNA polymerase delta by competing with POLD3 for PCNA binding. Plays an important role in controlling cell cycle progression and DNA damage-induced G2 arrest. Negatively regulates the CDK4- and CDK6-driven phosphorylation of RB1 in keratinocytes, thereby resulting in the release of E2F1 and subsequent transcription of E2F1-driven G1/S phase promoting genes. The sequence is that of Cyclin-dependent kinase inhibitor 1 (CDKN1A) from Felis catus (Cat).